Here is a 417-residue protein sequence, read N- to C-terminus: Gamma-glutamyl phosphate reductase (417 aa).

Belongs to the gamma-glutamyl phosphate reductase family.

The protein localises to the cytoplasm. It catalyses the reaction L-glutamate 5-semialdehyde + phosphate + NADP(+) = L-glutamyl 5-phosphate + NADPH + H(+). Its pathway is amino-acid biosynthesis; L-proline biosynthesis; L-glutamate 5-semialdehyde from L-glutamate: step 2/2. Its function is as follows. Catalyzes the NADPH-dependent reduction of L-glutamate 5-phosphate into L-glutamate 5-semialdehyde and phosphate. The product spontaneously undergoes cyclization to form 1-pyrroline-5-carboxylate. The sequence is that of Gamma-glutamyl phosphate reductase from Escherichia coli (strain 55989 / EAEC).